The chain runs to 3081 residues: Cilia- and flagella-associated protein 54 (3081 aa).

Disordered regions lie at residues S542–A579, T591–L626, P910–K942, A1406–P1451, E1518–V1586, R1636–P1657, G2176–P2210, M2229–A2306, and A2776–G2806. Residues G564–A579 are compositionally biased toward low complexity. Pro residues predominate over residues M1428–I1449. Positions G1538 to P1550 are enriched in basic and acidic residues. Composition is skewed to low complexity over residues A1638–G1648, A2181–A2199, and E2240–G2269. The segment covering P2289–S2301 has biased composition (pro residues). The span at A2776–P2788 shows a compositional bias: low complexity. Positions K2796–D2805 are enriched in gly residues.

This sequence belongs to the CFAP54 family. In terms of assembly, part of the PDCP1 complex composed of CFAP46, CFAP54, CFAP74 and CFAP221; the PDCP1 complex binds calmodulin.

Its subcellular location is the cytoplasm. It localises to the cytoskeleton. It is found in the cilium axoneme. This Chlamydomonas reinhardtii (Chlamydomonas smithii) protein is Cilia- and flagella-associated protein 54.